Reading from the N-terminus, the 148-residue chain is Nickel and cobalt resistance protein CnrR (148 aa).

The N-terminal stretch at Met-1–Ala-26 is a signal peptide. Residues Leu-28–Gln-148 are Periplasmic-facing. Residues Asn-54–Leu-117 are a coiled coil.

The protein to A.xylosoxydans NccX.

Its subcellular location is the periplasm. In terms of biological role, cnrH alone is able to activate cnr expression, while both CnrY and CrnR (CnrX) are needed for nickel induction of CnrH. Has been suggested to bind nickel. This is Nickel and cobalt resistance protein CnrR (cnrR) from Cupriavidus metallidurans (strain ATCC 43123 / DSM 2839 / NBRC 102507 / CH34) (Ralstonia metallidurans).